We begin with the raw amino-acid sequence, 402 residues long: MPPVNFGSYQTKIYHDGTNLNRLPAITTNPTLLEKHAREVLSSRAYSYIAGGAGEKSTMEANRLAFRQWKLVPRVMRPMDDQSISVNLFGQEYKSPLIVGPVGVQGLFHRDKETGVAQVCSELDVPYTLSTASSSSIEDVAAANQAGHRWFQLYWVHDEEILLSLLKRAKENGFTVLVVSLDTWTLGWRPTDLDQGYFPFYAGIGNDVGFSDPVFRAKHEKKGGKIEDDIIGAANAWVSELDDRPHTWEQVEFLRKHWQGPIVLKGIQHADDARRALETGCEGLVVSNHGGRQVDGAIGSLDALPDIVDAVGDKMTVMFDSGVRTGADVIKALCLGAKAVLVGRPVIYGLAIGGKEGAKSVIECLLADLWQGMGLAGMRTVADCNRDCMRRISYPGDLKTML.

The FMN hydroxy acid dehydrogenase domain maps to 22–394; it reads RLPAITTNPT…NRDCMRRISY (373 aa). Tyrosine 48 serves as a coordination point for a 2-oxocarboxylate. FMN is bound by residues serine 130 and glutamine 152. A 2-oxocarboxylate-binding residues include tyrosine 154 and arginine 189. FMN is bound at residue lysine 265. Histidine 289 serves as the catalytic Proton acceptor. Arginine 292 provides a ligand contact to a 2-oxocarboxylate. FMN contacts are provided by residues 320–324 and 343–344; these read DSGVR and GR.

This sequence belongs to the FMN-dependent alpha-hydroxy acid dehydrogenase family. It depends on FMN as a cofactor.

FMN-dependent alpha-hydroxy acid dehydrogenase; part of the gene cluster that mediates the biosynthesis of quinolactacin A2 (QUL A2), a fungal alkaloid that features a quinolone-gamma-lactam hybrid, which is a potential pharmacophore for the treatment of cancer and Alzheimer's disease. The quinolone-gamma-lactam hybrid scaffold is synthesized from the combination of L-isoleucine (L-Ile) and the nonproteinogenic amino acid L-kynurenine, followed by quinolone cyclization, oxidative decarboxylation, and lactam formation. Additionally, the N-methyl group is derived from methionine, which might be catalyzed by an S-adenosylmethionine (SAM)-dependent methyltransferase. Bioconversion of L-tryptophan to L-kynurenine could be catalyzed by the indoleamine-2,3-dioxygenase (IDO) qulI to produce an unstable product, N-formyl-L-kynurenine, followed by kynurenine formamidase catalyzed hydrolysis. QulM then acts as a methyltransferase that methylates L-kynurenine at the N-4 position. The FMN-dependent alpha-hydroxy acid dehydrogenase qulF than functions as an oxidative decarboxylase which converts N-methylkynurenine into 2-aminobenzoylacetamide via 2 tandem reactions, including dehydrogenation and decarboxylation. An amidase located outside of the qul gene cluster further produces the unstable beta-keto acid precursor N-methyl-2-aminobenzoylacetate, which could be spontaneously dehydrated to form N-methyl-4-hydroxy-2-quinolone. The NRPS qulB is able to incorporate N-methyl-2-aminobenzoylacetate and efficiently compete with the spontaneous reaction. By further extending the beta-keto acid with L-Ile, qulA performs a Dieckmann condensation to form the gamma-lactam ring and release a 4-ketopyrrolidinone intermediate from the assembly line. This intermediate could plausibly further undergo a spontaneous cyclization to yield the final quinolone-gamma-lactam hybrid structure. This is FMN-dependent alpha-hydroxy acid dehydrogenase qulF from Penicillium citrinum.